Here is a 263-residue protein sequence, read N- to C-terminus: Probable esterase PIR7A (263 aa).

Residue serine 82 is the Acyl-ester intermediate of the active site. Active-site charge relay system residues include aspartate 213 and histidine 241.

Belongs to the AB hydrolase superfamily.

In Oryza sativa subsp. indica (Rice), this protein is Probable esterase PIR7A (PIR7A).